The chain runs to 249 residues: Coproheme decarboxylase (249 aa).

Residues Arg131, 145-149 (YPMNK), His172, Gln185, and Ser223 contribute to the Fe-coproporphyrin III site. The active site involves Tyr145.

The protein belongs to the ChdC family. Type 1 subfamily. It depends on Fe-coproporphyrin III as a cofactor.

The catalysed reaction is Fe-coproporphyrin III + 2 H2O2 + 2 H(+) = heme b + 2 CO2 + 4 H2O. The enzyme catalyses Fe-coproporphyrin III + H2O2 + H(+) = harderoheme III + CO2 + 2 H2O. It catalyses the reaction harderoheme III + H2O2 + H(+) = heme b + CO2 + 2 H2O. It participates in porphyrin-containing compound metabolism; protoheme biosynthesis. Functionally, involved in coproporphyrin-dependent heme b biosynthesis. Catalyzes the decarboxylation of Fe-coproporphyrin III (coproheme) to heme b (protoheme IX), the last step of the pathway. The reaction occurs in a stepwise manner with a three-propionate intermediate. This chain is Coproheme decarboxylase, found in Thermus thermophilus (strain ATCC BAA-163 / DSM 7039 / HB27).